Consider the following 469-residue polypeptide: ATP synthase subunit beta (469 aa).

An ATP-binding site is contributed by 153 to 160 (GGAGVGKT).

It belongs to the ATPase alpha/beta chains family. As to quaternary structure, F-type ATPases have 2 components, CF(1) - the catalytic core - and CF(0) - the membrane proton channel. CF(1) has five subunits: alpha(3), beta(3), gamma(1), delta(1), epsilon(1). CF(0) has three main subunits: a(1), b(2) and c(9-12). The alpha and beta chains form an alternating ring which encloses part of the gamma chain. CF(1) is attached to CF(0) by a central stalk formed by the gamma and epsilon chains, while a peripheral stalk is formed by the delta and b chains.

Its subcellular location is the cell membrane. It catalyses the reaction ATP + H2O + 4 H(+)(in) = ADP + phosphate + 5 H(+)(out). Produces ATP from ADP in the presence of a proton gradient across the membrane. The catalytic sites are hosted primarily by the beta subunits. The chain is ATP synthase subunit beta from Pediococcus pentosaceus (strain ATCC 25745 / CCUG 21536 / LMG 10740 / 183-1w).